A 255-amino-acid chain; its full sequence is Small ribosomal subunit protein eS1 (255 aa).

The residue at position 2 (Ala-2) is an N-acetylalanine; partial.

It belongs to the eukaryotic ribosomal protein eS1 family. As to quaternary structure, component of the small ribosomal subunit. Mature ribosomes consist of a small (40S) and a large (60S) subunit. The 40S subunit contains about 33 different proteins and 1 molecule of RNA (18S). The 60S subunit contains about 49 different proteins and 3 molecules of RNA (25S, 5.8S and 5S).

Its subcellular location is the cytoplasm. In Yarrowia lipolytica (strain CLIB 122 / E 150) (Yeast), this protein is Small ribosomal subunit protein eS1.